A 175-amino-acid polypeptide reads, in one-letter code: Probable coatomer subunit zeta-A (175 aa).

The protein belongs to the adaptor complexes small subunit family. In terms of assembly, oligomeric complex that consists of at least the alpha, beta, beta', gamma, delta, epsilon and zeta subunits.

The protein resides in the cytoplasm. It localises to the golgi apparatus membrane. The protein localises to the cytoplasmic vesicle. Its subcellular location is the COPI-coated vesicle membrane. Functionally, the coatomer is a cytosolic protein complex that binds to dilysine motifs and reversibly associates with Golgi non-clathrin-coated vesicles, which further mediate biosynthetic protein transport from the ER, via the Golgi up to the trans Golgi network. Coatomer complex is required for budding from Golgi membranes, and is essential for the retrograde Golgi-to-ER transport of dilysine-tagged proteins. The zeta subunit may be involved in regulating the coat assembly and, hence, the rate of biosynthetic protein transport due to its association-dissociation properties with the coatomer complex. The protein is Probable coatomer subunit zeta-A (copZa) of Dictyostelium discoideum (Social amoeba).